Consider the following 179-residue polypeptide: Large ribosomal subunit protein uL6 (179 aa).

It belongs to the universal ribosomal protein uL6 family. Part of the 50S ribosomal subunit.

This protein binds to the 23S rRNA, and is important in its secondary structure. It is located near the subunit interface in the base of the L7/L12 stalk, and near the tRNA binding site of the peptidyltransferase center. This Synechocystis sp. (strain ATCC 27184 / PCC 6803 / Kazusa) protein is Large ribosomal subunit protein uL6.